A 1490-amino-acid chain; its full sequence is Leucine-rich repeat-containing protein 7 (1490 aa).

LRR repeat units follow at residues 23–44 (IISV…VFNF), 47–68 (TLEE…LFNC), 70–91 (ALRK…IASL), 93–114 (NLKE…IKCC), 116–137 (CLTI…FTQL), 139–161 (NLTQ…GRLV), 162–183 (KLRI…MHKL), 185–206 (QLER…LDQI), 208–229 (NLRE…IGKL), 231–253 (MLVY…SGCE), 254–275 (ALED…IGLL), 277–298 (KLTT…IGNL), 300–321 (LLEE…IGYL), 323–344 (SLRT…IGSC), 346–367 (NVTV…IGQM), 369–391 (RLRV…TKLK), and 392–413 (ELAA…QTEA). Phosphoserine is present on residues Ser439, Ser441, and Ser443. Residues 663 to 676 (KKESTDESEVDKTH) show a composition bias toward basic and acidic residues. Disordered stretches follow at residues 663–709 (KKES…VGSL), 775–808 (DNTG…HGRR), and 822–899 (ELEQ…YHDP). Residues 677 to 686 (CLNNSVSSGT) show a composition bias toward polar residues. Positions 687 to 700 (YSDYSPSQASSASS) are enriched in low complexity. A compositionally biased stretch (polar residues) spans 787–799 (ENANNNPLLSSKA). A Phosphothreonine modification is found at Thr831. Ser850 is modified (phosphoserine). Low complexity predominate over residues 859–871 (PSKLETTPTTSPL). Thr865 carries the post-translational modification Phosphothreonine. Residue Ser869 is modified to Phosphoserine. Residues 872–882 (PERKDHMKEPT) are compositionally biased toward basic and acidic residues. Residues Ser947, Ser949, and Ser1118 each carry the phosphoserine modification. Position 1149 is an omega-N-methylarginine (Arg1149). Polar residues predominate over residues 1194–1217 (LTQRRPLSARSYSTESYGASQTRP). The interval 1194–1218 (LTQRRPLSARSYSTESYGASQTRPV) is disordered. At Ser1233 the chain carries Phosphoserine. 2 disordered regions span residues 1238-1265 (GNYG…SCGK) and 1282-1312 (RLDR…PYPL). Residues 1243 to 1263 (KTSDNSDIKTRPTPVKGEESC) are compositionally biased toward basic and acidic residues. Over residues 1286–1307 (TPSQQSNILDNGQEDVSPSGQW) the composition is skewed to polar residues. Phosphoserine is present on residues Ser1288 and Ser1392. One can recognise a PDZ domain in the interval 1398–1488 (EQFCVRIEKN…TVDLVIQREL (91 aa)).

This sequence belongs to the LAP (LRR and PDZ) protein family. Interacts with CNKSR2 and DLG4. Interacts with CTNND2/Catenin delta-2. Forms a complex with N-cadherin through CTNND2. Interacts with CAMK2A. O-glycosylated and phosphorylated. Brain-specific. Highly concentrated at synapses.

It localises to the cytoplasm. The protein resides in the postsynaptic density. Required for normal synaptic spine architecture and function. Necessary for DISC1 and GRM5 localization to postsynaptic density complexes and for both N-methyl D-aspartate receptor-dependent and metabotropic glutamate receptor-dependent long term depression. The chain is Leucine-rich repeat-containing protein 7 (Lrrc7) from Rattus norvegicus (Rat).